The primary structure comprises 390 residues: Dihydroorotase (390 aa).

Residues His54 and His56 each contribute to the Zn(2+) site. Substrate is bound by residues His56–Arg58 and Asn88. Lys136, His160, His197, and Asp259 together coordinate Zn(2+). Lys136 carries the N6-carboxylysine modification. Residue Asp259 is part of the active site. Residues His263 and Pro277–Gly278 contribute to the substrate site.

The protein belongs to the metallo-dependent hydrolases superfamily. DHOase family. Class I DHOase subfamily. The cofactor is Zn(2+).

The catalysed reaction is (S)-dihydroorotate + H2O = N-carbamoyl-L-aspartate + H(+). It participates in pyrimidine metabolism; UMP biosynthesis via de novo pathway; (S)-dihydroorotate from bicarbonate: step 3/3. Its function is as follows. Catalyzes the reversible cyclization of carbamoyl aspartate to dihydroorotate. This is Dihydroorotase from Saccharolobus solfataricus (strain ATCC 35092 / DSM 1617 / JCM 11322 / P2) (Sulfolobus solfataricus).